We begin with the raw amino-acid sequence, 182 residues long: Testis-expressed protein 29 (182 aa).

The Extracellular portion of the chain corresponds to 1 to 56; sequence MRYTTDIKKSPPQLLKTFAVCDISLYDICDYNVTRDQCKELGCCFYKGVCYKKVVP. The helical transmembrane segment at 57–77 threads the bilayer; it reads IYVQMFSTLIVLVTGIIIITI. Over 78–182 the chain is Cytoplasmic; sequence IYRIVQEIKR…PPTDPSENPP (105 aa). The segment at 91–182 is disordered; the sequence is LSMNSTPKAS…PPTDPSENPP (92 aa). Low complexity predominate over residues 115–170; sequence RAPSRSPSRTSSTLSSRSPTTAPTTAPTTDPATDPATDPATDPATDPATDPATDPA. A compositionally biased stretch (pro residues) spans 171-182; it reads TAPPTDPSENPP.

It localises to the membrane. The protein is Testis-expressed protein 29 (Tex29) of Rattus norvegicus (Rat).